We begin with the raw amino-acid sequence, 259 residues long: 5'-nucleotidase SurE (259 aa).

Asp8, Asp9, Ser39, and Asn93 together coordinate a divalent metal cation.

The protein belongs to the SurE nucleotidase family. Requires a divalent metal cation as cofactor.

The protein resides in the cytoplasm. It carries out the reaction a ribonucleoside 5'-phosphate + H2O = a ribonucleoside + phosphate. Functionally, nucleotidase that shows phosphatase activity on nucleoside 5'-monophosphates. The polypeptide is 5'-nucleotidase SurE (Thermococcus kodakarensis (strain ATCC BAA-918 / JCM 12380 / KOD1) (Pyrococcus kodakaraensis (strain KOD1))).